The chain runs to 531 residues: Pancreatic secretory granule membrane major glycoprotein GP2 (531 aa).

Residues 1–21 form the signal peptide; it reads MVGCDLLWLAAASCVLTLVSP. A glycan (N-linked (GlcNAc...) asparagine) is linked at Asn-33. Residues 34–53 are beta hairpin; that stretch reads SSNLDLDCGSPDSPSSGICF. 11 disulfides stabilise this stretch: Cys-41-Cys-52, Cys-56-Cys-151, Cys-79-Cys-169, Cys-101-Cys-139, Cys-107-Cys-174, Cys-132-Cys-140, Cys-184-Cys-194, Cys-188-Cys-203, Cys-205-Cys-235, Cys-223-Cys-314, and Cys-255-Cys-278. The segment at 54 to 74 is D10C; sequence DPCQNHTVLNDPTRSTENNDS. Asn-58 and Asn-72 each carry an N-linked (GlcNAc...) asparagine glycan. The 45-residue stretch at 180–224 folds into the EGF-like domain; the sequence is APKNCEITCRPEEECVFQNNNWSCVCRQDLHVSDSQSLQPLLDCG. The N-linked (GlcNAc...) asparagine glycan is linked to Asn-200. The tract at residues 222 to 315 is ZP-N; that stretch reads DCGDNEIKVK…FRVNVNFQCA (94 aa). The 257-residue stretch at 222–478 folds into the ZP domain; that stretch reads DCGDNEIKVK…PSCSTNRLRS (257 aa). Residues Asn-256 and Asn-285 are each glycosylated (N-linked (GlcNAc...) asparagine). Residues 316-339 form a flexible ZP-N/ZP-C linker region; the sequence is YPLDMSVSLETALQPIVSSLTVDV. An internal hydrophobic patch (IHP) region spans residues 340–351; that stretch reads DGAGEFNVKMAL. Residues 340–478 form a ZP-C region; sequence DGAGEFNVKM…PSCSTNRLRS (139 aa). Disulfide bonds link Cys-395/Cys-455, Cys-416/Cys-471, and Cys-460/Cys-467. Residues 485 to 493 form an external hydrophobic patch (EHP) region; it reads YNRVLDLGP.

Interacts with SYCN. Interacts with bacterial adhesin fimH. N-glycosylated. As to expression, specifically expressed by M (microfold) cells which are atypical epithelial cells of the intestine.

It localises to the zymogen granule membrane. Its subcellular location is the secreted. The protein localises to the cell membrane. It is found in the apical cell membrane. The protein resides in the membrane raft. It localises to the endosome. Functionally, functions as an intestinal M-cell transcytotic receptor specific of type-I-piliated bacteria that participates in the mucosal immune response toward these bacteria. At the apical membrane of M-cells it binds fimH, a protein of the bacteria type I pilus tip. Internalizes bound bacteria, like E.coli and S.typhimurium, from the lumen of the intestine and delivers them, through M-cells, to the underlying organized lymphoid follicles where they are captured by antigen-presenting dendritic cells to elicit a mucosal immune response. The protein is Pancreatic secretory granule membrane major glycoprotein GP2 of Mus musculus (Mouse).